The following is a 418-amino-acid chain: BTB and MATH domain-containing protein 41 (418 aa).

The disordered stretch occupies residues 1-33; sequence MEINNGAQPENAAVSIPSRSPSGKSEKRKSPSI. An MATH domain is found at 45–173; the sequence is SFTNYWSVER…NDILTIGCEL (129 aa). The BTB domain maps to 232-293; the sequence is SDFIIVASCG…TLDVLLRHMY (62 aa).

As to quaternary structure, interacts with cul-3.

It functions in the pathway protein modification; protein ubiquitination. Its function is as follows. Probable substrate-specific adapter of an E3 ubiquitin-protein ligase complex which mediates the ubiquitination and subsequent proteasomal degradation of target proteins. This is BTB and MATH domain-containing protein 41 (bath-41) from Caenorhabditis elegans.